We begin with the raw amino-acid sequence, 554 residues long: CTP synthase (554 aa).

Residues 1–265 (MTPLIFVTGG…DEIVIDQFKL (265 aa)) form an amidoligase domain region. Ser-13 is a binding site for CTP. Residue Ser-13 participates in UTP binding. ATP contacts are provided by residues 14–19 (SLGKGI) and Asp-71. Residues Asp-71 and Glu-139 each coordinate Mg(2+). Residues 146–148 (DIE), 186–191 (KTKPTQ), and Lys-222 each bind CTP. Residues 186-191 (KTKPTQ) and Lys-222 contribute to the UTP site. The Glutamine amidotransferase type-1 domain maps to 292–545 (TIAVVGKYVD…VKASRARKAG (254 aa)). Residue Gly-353 participates in L-glutamine binding. Catalysis depends on Cys-380, which acts as the Nucleophile; for glutamine hydrolysis. L-glutamine is bound by residues 381 to 384 (YGMQ), Glu-404, and Arg-471. Catalysis depends on residues His-518 and Glu-520.

The protein belongs to the CTP synthase family. As to quaternary structure, homotetramer.

It catalyses the reaction UTP + L-glutamine + ATP + H2O = CTP + L-glutamate + ADP + phosphate + 2 H(+). The catalysed reaction is L-glutamine + H2O = L-glutamate + NH4(+). The enzyme catalyses UTP + NH4(+) + ATP = CTP + ADP + phosphate + 2 H(+). It functions in the pathway pyrimidine metabolism; CTP biosynthesis via de novo pathway; CTP from UDP: step 2/2. With respect to regulation, allosterically activated by GTP, when glutamine is the substrate; GTP has no effect on the reaction when ammonia is the substrate. The allosteric effector GTP functions by stabilizing the protein conformation that binds the tetrahedral intermediate(s) formed during glutamine hydrolysis. Inhibited by the product CTP, via allosteric rather than competitive inhibition. Catalyzes the ATP-dependent amination of UTP to CTP with either L-glutamine or ammonia as the source of nitrogen. Regulates intracellular CTP levels through interactions with the four ribonucleotide triphosphates. The sequence is that of CTP synthase from Xylella fastidiosa (strain M12).